The following is a 47-amino-acid chain: Small, acid-soluble spore protein N (47 aa).

The segment at 1–47 is disordered; the sequence is MSNPKRSPNHFAPNHIGTQPRAAGGNKGKQMQDQSGQHAQVIQTKGE. Residues 29 to 47 are compositionally biased toward polar residues; the sequence is KQMQDQSGQHAQVIQTKGE.

Belongs to the SspN family.

It is found in the spore core. This is Small, acid-soluble spore protein N from Geobacillus thermodenitrificans (strain NG80-2).